The following is a 177-amino-acid chain: Large ribosomal subunit protein uL6 (177 aa).

The protein belongs to the universal ribosomal protein uL6 family. As to quaternary structure, part of the 50S ribosomal subunit.

In terms of biological role, this protein binds to the 23S rRNA, and is important in its secondary structure. It is located near the subunit interface in the base of the L7/L12 stalk, and near the tRNA binding site of the peptidyltransferase center. This chain is Large ribosomal subunit protein uL6, found in Aliivibrio fischeri (strain MJ11) (Vibrio fischeri).